The sequence spans 212 residues: MRLTGLLCVALWSASAVVLAEHQPCRPPPQTHGNLWVTAAKGAPASVGEFNYDSQARKLHFKDDALHVNKTDHLEMLIFFEEGIFYDIDSHNQSCHKKTLQSTYHCLEVPPNATHVTEGYLGSEFIGDQGVRMRKWRKRVPELDGVVTVATTSCGCVTLFATLFTDSNDVLVFNFLDVEMKVKNPLEVFVPPSYCDGVALEEEGDTFFGLFH.

Positions 1–20 are cleaved as a signal peptide; it reads MRLTGLLCVALWSASAVVLA. N-linked (GlcNAc...) asparagine glycosylation is found at asparagine 69, asparagine 92, and asparagine 112.

The protein belongs to the ependymin family. As to quaternary structure, forms disulfide-linked dimers. Post-translationally, binds calcium through the terminal sialic acids. As to expression, EPDs are synthesized in the meninx and secreted in the cerebrospinal fluid.

Its subcellular location is the secreted. Its function is as follows. May play a role in neural plasticity. May be involved during axon regeneration. This is Ependymin (epd) from Clupea harengus (Atlantic herring).